A 287-amino-acid polypeptide reads, in one-letter code: Pyridoxal kinase PdxY (287 aa).

Residues Ser-10 and 45 to 46 (TQ) each bind substrate. Residues Asp-112, Ala-144, Glu-149, Lys-182, and 209–212 (RPLV) each bind ATP. Asp-224 serves as a coordination point for substrate.

This sequence belongs to the pyridoxine kinase family. PdxY subfamily. Homodimer. It depends on Mg(2+) as a cofactor.

The catalysed reaction is pyridoxal + ATP = pyridoxal 5'-phosphate + ADP + H(+). It participates in cofactor metabolism; pyridoxal 5'-phosphate salvage; pyridoxal 5'-phosphate from pyridoxal: step 1/1. Its function is as follows. Pyridoxal kinase involved in the salvage pathway of pyridoxal 5'-phosphate (PLP). Catalyzes the phosphorylation of pyridoxal to PLP. The polypeptide is Pyridoxal kinase PdxY (Escherichia coli (strain UTI89 / UPEC)).